The primary structure comprises 1266 residues: Intermembrane phospholipid transporter YhdP (1266 aa).

Residues 1 to 5 (MRRLP) are Cytoplasmic-facing. The helical transmembrane segment at 6–26 (GILLLTGAALVVIAALLVSGL) threads the bilayer. At 27 to 1266 (RIALPHLDAW…LRQPRKEKAQ (1240 aa)) the chain is on the periplasmic side. Positions 94–103 (VWQSLLHMRW) are P-helix. The interval 1121–1144 (HAGQLLRLLSVDALMRKLRFDFRD) is C-helix_2. The interval 1203 to 1237 (ISATVGVAAAFAVNPIVGAAVFAASKVLGPLWSKV) is C-helix_1.

It is found in the cell inner membrane. In terms of biological role, involved in outer membrane lipid homeostasis. Likely transports phospholipids between the inner membrane and the outer membrane. It would provide a bridge-like structure that protects phospholipids as they travel across the periplasm. The phosphate-containing molecules are captured along the length of a hydrophobic groove that is continuous along all but the extreme N-terminus of the protein. It also appears to control, directly or indirectly, levels of cyclic enterobacterial common antigen (cyclic ECA), a soluble cyclic ECA molecule present in the periplasm. TamB, YdbH and YhdP are redundant, but not equivalent, in performing an essential function for growth and maintaining lipid homeostasis in the outer membrane. The transport functions of TamB and YhdP could be differentiated according to the fatty acid saturation state of the phospholipids, with TamB transporting more unsaturated phospholipids and YhdP more saturated phospholipids. Any of these three proteins is sufficient for growth. The chain is Intermembrane phospholipid transporter YhdP (yhdP) from Escherichia coli (strain K12).